Consider the following 393-residue polypeptide: Formate-dependent phosphoribosylglycinamide formyltransferase (393 aa).

N(1)-(5-phospho-beta-D-ribosyl)glycinamide is bound by residues 22–23 (EL) and E82. ATP is bound by residues R114, K155, 160–165 (SSGHGQ), 195–198 (EGFI), and E203. Residues 119-308 (RLAAEELGLP…QFALHARAIL (190 aa)) form the ATP-grasp domain. The Mg(2+) site is built by E267 and E279. N(1)-(5-phospho-beta-D-ribosyl)glycinamide is bound by residues D286, K356, and 363-364 (RR).

It belongs to the PurK/PurT family. As to quaternary structure, homodimer.

The enzyme catalyses N(1)-(5-phospho-beta-D-ribosyl)glycinamide + formate + ATP = N(2)-formyl-N(1)-(5-phospho-beta-D-ribosyl)glycinamide + ADP + phosphate + H(+). Its pathway is purine metabolism; IMP biosynthesis via de novo pathway; N(2)-formyl-N(1)-(5-phospho-D-ribosyl)glycinamide from N(1)-(5-phospho-D-ribosyl)glycinamide (formate route): step 1/1. Involved in the de novo purine biosynthesis. Catalyzes the transfer of formate to 5-phospho-ribosyl-glycinamide (GAR), producing 5-phospho-ribosyl-N-formylglycinamide (FGAR). Formate is provided by PurU via hydrolysis of 10-formyl-tetrahydrofolate. The protein is Formate-dependent phosphoribosylglycinamide formyltransferase of Haemophilus ducreyi (strain 35000HP / ATCC 700724).